The primary structure comprises 291 residues: Elongation factor Ts (291 aa).

The interval 84 to 87 (TDFV) is involved in Mg(2+) ion dislocation from EF-Tu.

The protein belongs to the EF-Ts family.

The protein resides in the cytoplasm. Functionally, associates with the EF-Tu.GDP complex and induces the exchange of GDP to GTP. It remains bound to the aminoacyl-tRNA.EF-Tu.GTP complex up to the GTP hydrolysis stage on the ribosome. This chain is Elongation factor Ts, found in Bifidobacterium adolescentis (strain ATCC 15703 / DSM 20083 / NCTC 11814 / E194a).